Consider the following 330-residue polypeptide: MGDFDLNVDSLIQRLLEMRSCRTGKQVQMTEAEVRGLCLKSREIFLQQPILLELEAPLIICGDIHGQYTDLLRLFEYGGFPPAANYLFLGDYVDRGKQSLETICLLLAYKIKYPENFFLLRGNHECASINRIYGFYDECKRRYNVKLWKTFTDCFNCLPVAAIIDEKIFCCHGGLSPDLQGMEQIRRLMRPTDVPDTGLLCDLLWSDPDKDVQGWGENDRGVSFTFGVDVVSKFLNRHELDLICRAHQVVEDGYEFFARRQLVTLFSAPNYCGEFDNAGGMMTVDDTLMCSFQILKPSEKKAKYLYSGMNSSRPTTPQRSAPMLATNKKK.

4 residues coordinate Mn(2+): Asp63, His65, Asp91, and Asn123. Residue His124 is the Proton donor of the active site. The Mn(2+) site is built by His172 and His247. Residues 308 to 319 show a composition bias toward polar residues; the sequence is GMNSSRPTTPQR. The segment at 308–330 is disordered; sequence GMNSSRPTTPQRSAPMLATNKKK. Residues Thr315 and Thr316 each carry the phosphothreonine modification.

This sequence belongs to the PPP phosphatase family. PP-1 subfamily. Interacts with Nop17l. Interacts with uri; uri inhibits flw phosphatase activity. The cofactor is Mn(2+).

It carries out the reaction O-phospho-L-seryl-[protein] + H2O = L-seryl-[protein] + phosphate. The enzyme catalyses O-phospho-L-threonyl-[protein] + H2O = L-threonyl-[protein] + phosphate. Its function is as follows. Required for cell adhesion in non-muscle tissues and in maintenance of muscle attachment. Vital for larval development. The polypeptide is Serine/threonine-protein phosphatase beta isoform (flw) (Drosophila melanogaster (Fruit fly)).